The primary structure comprises 571 residues: Potassium-transporting ATPase potassium-binding subunit (571 aa).

Helical transmembrane passes span 7 to 27 (LQFAALIAVLLLTAPALGGYL), 66 to 86 (TYALSVLAFSVMSFLLLYGIA), 137 to 157 (GLAVQNFVSASAGMCVLAALI), 188 to 208 (FVVAILLVSQGVIQNLHGFIV), 255 to 275 (IGNFVENWAILIIPFALCFAF), 286 to 306 (WAVLAIMGIIWIGMSVAAMSF), 390 to 410 (VGLNGLLVMAILAVFIAGLMV), 430 to 450 (TLYILAMPIALLSFAAASVLI), 497 to 517 (IGVAMLIGRFFLIIPVLAIAG), and 538 to 558 (LFVGLVIGVVLIVGGLTFFPA).

The protein belongs to the KdpA family. The system is composed of three essential subunits: KdpA, KdpB and KdpC.

It is found in the cell membrane. Part of the high-affinity ATP-driven potassium transport (or Kdp) system, which catalyzes the hydrolysis of ATP coupled with the electrogenic transport of potassium into the cytoplasm. This subunit binds the extracellular potassium ions and delivers the ions to the membrane domain of KdpB through an intramembrane tunnel. The polypeptide is Potassium-transporting ATPase potassium-binding subunit (Mycobacterium bovis (strain ATCC BAA-935 / AF2122/97)).